The primary structure comprises 170 residues: Small ribosomal subunit protein uS5 (170 aa).

One can recognise an S5 DRBM domain in the interval 12–75 (WSELLVSVRR…NAAKKSMIRV (64 aa)).

It belongs to the universal ribosomal protein uS5 family. As to quaternary structure, part of the 30S ribosomal subunit. Contacts proteins S4 and S8.

In terms of biological role, with S4 and S12 plays an important role in translational accuracy. Its function is as follows. Located at the back of the 30S subunit body where it stabilizes the conformation of the head with respect to the body. This Wolbachia sp. subsp. Brugia malayi (strain TRS) protein is Small ribosomal subunit protein uS5.